Reading from the N-terminus, the 1175-residue chain is MHIKEICLEGFKSYATRTVVSGFDPHFNAITGLNGSGKSNILDSICFVLGITNLQQVRAANLQELVYKQGQAGITKATVSVTFDNSERHRSPLGYEEHPEITVTRQIVVGGRNKYLINGKLAQPSQVQNLFHSVQLNVNNPHFLIMQGRITKVLNMKPPEILSMLEEAAGTRMYENKKEAALKTLEKKQTKVDEINKLLDHEILPALEKLRKEKSQYMQWANGNAELDRLRRFCIAFEYVQAEKIRDNAVLGVGEMKAKLGKIDAETEKTQEEIQEFEKQIKALTQAKEASMGGEVKTLSEKVDSLAQEMTRESSKLNNKEDTLLGEKENVEKIVHSIEDLKKSVKERAAAVKKSEEGAADLKQRFQELSTTLEECEKEHQGVLAGKSSGDEEKCLEDQLRDAKIAVGTAGTELKQLKTKIEHCEKELKERKSQLMSKLEEAIEVENELGARKNDVEHVKKALESIPYNEGQMEALEKDRGAELEVVQRLEDKVRGLSAQLANFQFTYSDPVRNFDRSKVKGVVAKLIKVKDRSSMTALEVTAGGKLYDVVVDSEDTGKQLLQNGALRRRVTIIPLNKIQSYVVQPRVQQATARLVGKDNAELALSLVGYSDELKNAMEYVFGSTFVCKTTDVAKEVAFNRDIRTPSVTLEGDIFQPSGLLTGGSRKGGGDRLRKLHDLAEAESELQGHQKRLADVESQIKELQPLQMKFTDVYAQLELKTYDLSLFLKRAEQNEHHKLGEAVKKLEEELEEAKSQIKEKELAYKNCFDAVSKLENSIKDHDKNREGRLKDLEKNIKTIKAQMQAASKDLKSHENEKEKLVMEEEAMKQEQSSLESHLTSLETQISTLTSEVDEQRAKVDALQKIHDESLAELKLIHAKMKECDTQISGFVTDQEKCLQKLSDMKLERKKLENEVVRMETDHKDCSVKVDKLVEKHTWIASEKQLFGKGGTDYDFESCDPYVAREKLEKLQSDQSGLEKRVNKKVMAMFEKAEDEYNALISKKNTIENDKSKITKVIEELDEKKKETLKVTWVKVNQDFGSIFSTLLPGTMAKLEPPEDGNFLDGLEVRVAFGKVWKQSLSELSGGQRSLLALSLILALLLFKPAPLYILDEVDAALDLSHTQNIGRMIRAHFPHSQFIVVSLKEGMFNNANVLFRTKFVDGVSTVQRTVTKQTK.

A Zinc-hook domain is found at 2 to 1161 (HIKEICLEGF…NVLFRTKFVD (1160 aa)). Position 32–39 (32–39 (GLNGSGKS)) interacts with ATP. Positions 172–508 (RMYENKKEAA…AQLANFQFTY (337 aa)) form a coiled coil. The 121-residue stretch at 518-638 (SKVKGVVAKL…KTTDVAKEVA (121 aa)) folds into the SMC hinge domain. The stretch at 673–1028 (LRKLHDLAEA…ELDEKKKETL (356 aa)) forms a coiled coil.

This sequence belongs to the SMC family. SMC2 subfamily. In terms of assembly, forms a heterodimer with SMC4. Component of the condensin complex, which contains the SMC2 and SMC4 heterodimer, and three non SMC subunits that probably regulate the complex: CAPH, CAPD2 and CAPG. Highly expressed in roots and young floral buds.

It localises to the nucleus. Its function is as follows. Central component of the condensin complex, a complex required for conversion of interphase chromatin into mitotic-like condense chromosomes. The condensin complex probably introduces positive supercoils into relaxed DNA in the presence of type I topoisomerases and converts nicked DNA into positive knotted forms in the presence of type II topoisomerases. Also involved in chromosome segregation in meiosis. The sequence is that of Structural maintenance of chromosomes protein 2-1 (SMC2-1) from Arabidopsis thaliana (Mouse-ear cress).